Consider the following 196-residue polypeptide: Large ribosomal subunit protein uL18 (196 aa).

This sequence belongs to the universal ribosomal protein uL18 family. In terms of assembly, part of the 50S ribosomal subunit. Contacts the 5S and 23S rRNAs.

In terms of biological role, this is one of the proteins that bind and probably mediate the attachment of the 5S RNA into the large ribosomal subunit, where it forms part of the central protuberance. This Thermofilum pendens (strain DSM 2475 / Hrk 5) protein is Large ribosomal subunit protein uL18.